Here is a 341-residue protein sequence, read N- to C-terminus: HTH-type transcriptional repressor PurR (341 aa).

Positions 2–56 constitute an HTH lacI-type domain; it reads ATIKDVAKRAGVSTTTVSHVINKTRFVADETREAVWVAIKELHYSPSAVARSLKV. The segment at residues 4–23 is a DNA-binding region (H-T-H motif); it reads IKDVAKRAGVSTTTVSHVIN. A DNA-binding region spans residues 48-56; sequence SAVARSLKV. Y73, R190, T192, F221, and D275 together coordinate hypoxanthine.

As to quaternary structure, homodimer.

The protein operates within purine metabolism; purine nucleotide biosynthesis [regulation]. In terms of biological role, is the main repressor of the genes involved in the de novo synthesis of purine nucleotides, regulating purB, purC, purEK, purF, purHD, purL, purMN and guaBA expression. PurR is allosterically activated to bind its cognate DNA by binding the purine corepressors, hypoxanthine or guanine, thereby effecting transcription repression. This Erwinia tasmaniensis (strain DSM 17950 / CFBP 7177 / CIP 109463 / NCPPB 4357 / Et1/99) protein is HTH-type transcriptional repressor PurR.